The following is a 93-amino-acid chain: Small ribosomal subunit protein uS19 (93 aa).

This sequence belongs to the universal ribosomal protein uS19 family.

Protein S19 forms a complex with S13 that binds strongly to the 16S ribosomal RNA. The polypeptide is Small ribosomal subunit protein uS19 (Lawsonia intracellularis (strain PHE/MN1-00)).